Reading from the N-terminus, the 411-residue chain is Dual-specificity RNA methyltransferase RlmN (411 aa).

Glutamate 125 acts as the Proton acceptor in catalysis. The region spanning 131 to 380 (EEGRGTLCIS…IRTPRGRDIL (250 aa)) is the Radical SAM core domain. Cysteine 138 and cysteine 383 are disulfide-bonded. Residues cysteine 145, cysteine 149, and cysteine 152 each coordinate [4Fe-4S] cluster. S-adenosyl-L-methionine contacts are provided by residues 209 to 210 (GE), serine 241, 263 to 265 (SLH), and asparagine 340. Catalysis depends on cysteine 383, which acts as the S-methylcysteine intermediate.

Belongs to the radical SAM superfamily. RlmN family. The cofactor is [4Fe-4S] cluster.

It localises to the cytoplasm. The enzyme catalyses adenosine(2503) in 23S rRNA + 2 reduced [2Fe-2S]-[ferredoxin] + 2 S-adenosyl-L-methionine = 2-methyladenosine(2503) in 23S rRNA + 5'-deoxyadenosine + L-methionine + 2 oxidized [2Fe-2S]-[ferredoxin] + S-adenosyl-L-homocysteine. It carries out the reaction adenosine(37) in tRNA + 2 reduced [2Fe-2S]-[ferredoxin] + 2 S-adenosyl-L-methionine = 2-methyladenosine(37) in tRNA + 5'-deoxyadenosine + L-methionine + 2 oxidized [2Fe-2S]-[ferredoxin] + S-adenosyl-L-homocysteine. Functionally, specifically methylates position 2 of adenine 2503 in 23S rRNA and position 2 of adenine 37 in tRNAs. m2A2503 modification seems to play a crucial role in the proofreading step occurring at the peptidyl transferase center and thus would serve to optimize ribosomal fidelity. This Brucella suis biovar 1 (strain 1330) protein is Dual-specificity RNA methyltransferase RlmN.